A 252-amino-acid polypeptide reads, in one-letter code: 2-succinyl-6-hydroxy-2,4-cyclohexadiene-1-carboxylate synthase (252 aa).

This sequence belongs to the AB hydrolase superfamily. MenH family. Monomer.

It catalyses the reaction 5-enolpyruvoyl-6-hydroxy-2-succinyl-cyclohex-3-ene-1-carboxylate = (1R,6R)-6-hydroxy-2-succinyl-cyclohexa-2,4-diene-1-carboxylate + pyruvate. The protein operates within quinol/quinone metabolism; 1,4-dihydroxy-2-naphthoate biosynthesis; 1,4-dihydroxy-2-naphthoate from chorismate: step 3/7. It functions in the pathway quinol/quinone metabolism; menaquinone biosynthesis. Its function is as follows. Catalyzes a proton abstraction reaction that results in 2,5-elimination of pyruvate from 2-succinyl-5-enolpyruvyl-6-hydroxy-3-cyclohexene-1-carboxylate (SEPHCHC) and the formation of 2-succinyl-6-hydroxy-2,4-cyclohexadiene-1-carboxylate (SHCHC). In Escherichia coli O157:H7, this protein is 2-succinyl-6-hydroxy-2,4-cyclohexadiene-1-carboxylate synthase.